We begin with the raw amino-acid sequence, 241 residues long: Large ribosomal subunit protein uL3 (241 aa).

Disordered regions lie at residues 139–164 and 215–241; these read VSHR…KMPG and DAPK…QEGA. Position 151 is an N5-methylglutamine (Gln151).

Belongs to the universal ribosomal protein uL3 family. As to quaternary structure, part of the 50S ribosomal subunit. Forms a cluster with proteins L14 and L19. Methylated by PrmB.

Functionally, one of the primary rRNA binding proteins, it binds directly near the 3'-end of the 23S rRNA, where it nucleates assembly of the 50S subunit. The chain is Large ribosomal subunit protein uL3 from Rhodopseudomonas palustris (strain BisB5).